Reading from the N-terminus, the 142-residue chain is DNA-directed RNA polymerase II subunit RPB4 (142 aa).

This sequence belongs to the eukaryotic RPB4 RNA polymerase subunit family. As to quaternary structure, component of the RNA polymerase II (Pol II) core complex consisting of 12 subunits: a ten-subunit catalytic core composed of POLR2A/RPB1, POLR2B/RPB2, POLR2C/RPB3, POLR2I/RPB9, POLR2J/RPB11, POLR2E/RPABC1, POLR2F/RPABC2, POLR2H/RPABC3, POLR2K/RPABC4 and POLR2L/RPABC5 and a mobile stalk composed of two subunits POLR2D/RPB4 and POLR2G/RPB7, protruding from the core and functioning primarily in transcription initiation. Part of Pol II(G) complex, in which Pol II core associates with an additional subunit POLR2M; unlike conventional Pol II, Pol II(G) functions as a transcriptional repressor. Part of Pol II pre-initiation complex (PIC), in which Pol II core assembles with Mediator, general transcription factors and other specific initiation factors including GTF2E1, GTF2E2, GTF2F1, GTF2F2, TCEA1, ERCC2, ERCC3, GTF2H2, GTF2H3, GTF2H4, GTF2H5, GTF2A1, GTF2A2, GTF2B and TBP; this large multi-subunit PIC complex mediates DNA unwinding and targets Pol II core to the transcription start site where the first phosphodiester bond forms.

The protein localises to the nucleus. In terms of biological role, core component of RNA polymerase II (Pol II), a DNA-dependent RNA polymerase which synthesizes mRNA precursors and many functional non-coding RNAs using the four ribonucleoside triphosphates as substrates. Pol II is the central component of the basal RNA polymerase II transcription machinery. It is composed of mobile elements that move relative to each other. POLR2D/RPB4 is part of a subcomplex with POLR2G/RPB7 that binds to a pocket formed by POLR2A/RPB1, POLR2B/RPB2 and POLR2F/RPABC2 at the base of the clamp element. The POLR2D/RPB4-POLR2G/RPB7 subcomplex seems to lock the clamp via POLR2G/RPB7 in the closed conformation thus preventing double-stranded DNA to enter the active site cleft. The POLR2D/RPB4-POLR2G/RPB7 subcomplex binds single-stranded DNA and RNA. The protein is DNA-directed RNA polymerase II subunit RPB4 (POLR2D) of Bos taurus (Bovine).